Consider the following 606-residue polypeptide: 4-hydroxy-3-methylbut-2-en-1-yl diphosphate synthase (flavodoxin) (606 aa).

The [4Fe-4S] cluster site is built by Cys513, Cys516, Cys547, and Glu554.

Belongs to the IspG family. [4Fe-4S] cluster serves as cofactor.

The catalysed reaction is (2E)-4-hydroxy-3-methylbut-2-enyl diphosphate + oxidized [flavodoxin] + H2O + 2 H(+) = 2-C-methyl-D-erythritol 2,4-cyclic diphosphate + reduced [flavodoxin]. The protein operates within isoprenoid biosynthesis; isopentenyl diphosphate biosynthesis via DXP pathway; isopentenyl diphosphate from 1-deoxy-D-xylulose 5-phosphate: step 5/6. Converts 2C-methyl-D-erythritol 2,4-cyclodiphosphate (ME-2,4cPP) into 1-hydroxy-2-methyl-2-(E)-butenyl 4-diphosphate. The sequence is that of 4-hydroxy-3-methylbut-2-en-1-yl diphosphate synthase (flavodoxin) from Chlamydia felis (strain Fe/C-56) (Chlamydophila felis).